Reading from the N-terminus, the 173-residue chain is Trafficking regulator of GLUT4 1 (173 aa).

Over residues 1–17 the composition is skewed to polar residues; that stretch reads MANPVQPQLQDPGSTSP. A disordered region spans residues 1–22; the sequence is MANPVQPQLQDPGSTSPLDLPE. Topologically, residues 1–102 are cytoplasmic; sequence MANPVQPQLQ…QDQEAPKDYL (102 aa). A phosphoserine mark is found at S16, S43, S45, S70, S84, and S85. An intramembrane region (helical) is located at residues 103–123; it reads VLAIASCFCPVWPLNLIPLIF. Residues 124 to 150 lie on the Cytoplasmic side of the membrane; the sequence is SIMSRSSVQQGDLDGARRLGRLARLLS. The chain crosses the membrane as a helical span at residues 151-171; that stretch reads ITFIILGIVIIIVAVTVNFTV. The Extracellular portion of the chain corresponds to 172 to 173; it reads PK.

Belongs to the CD225/Dispanin family. As to quaternary structure, interacts with SLC2A4; the interaction is required for proper SLC2A4 reacycling after insulin stimulation. In terms of tissue distribution, present in adipose tissue and undetectable in other tissues (at protein level).

The protein resides in the cell membrane. Its subcellular location is the endomembrane system. It is found in the cytoplasm. The protein localises to the perinuclear region. Regulates insulin-mediated adipose tissue glucose uptake and transport by modulation of SLC2A4 recycling. Not required for SLC2A4 membrane fusion upon an initial stimulus, but rather is necessary for proper protein recycling during prolonged insulin stimulation. The chain is Trafficking regulator of GLUT4 1 from Rattus norvegicus (Rat).